Reading from the N-terminus, the 152-residue chain is Nucleoside diphosphate kinase (152 aa).

The ATP site is built by lysine 11, phenylalanine 59, arginine 87, threonine 93, arginine 104, and asparagine 114. Histidine 117 (pros-phosphohistidine intermediate) is an active-site residue.

This sequence belongs to the NDK family. In terms of assembly, homotetramer. It depends on Mg(2+) as a cofactor.

It is found in the cytoplasm. It carries out the reaction a 2'-deoxyribonucleoside 5'-diphosphate + ATP = a 2'-deoxyribonucleoside 5'-triphosphate + ADP. It catalyses the reaction a ribonucleoside 5'-diphosphate + ATP = a ribonucleoside 5'-triphosphate + ADP. Functionally, major role in the synthesis of nucleoside triphosphates other than ATP. The ATP gamma phosphate is transferred to the NDP beta phosphate via a ping-pong mechanism, using a phosphorylated active-site intermediate. The protein is Nucleoside diphosphate kinase of Prochlorococcus marinus (strain MIT 9313).